A 432-amino-acid polypeptide reads, in one-letter code: C2H2 type master regulator of conidiophore development brlA (432 aa).

Disordered stretches follow at residues 22 to 72 (SNEC…RTPG) and 238 to 260 (KQHS…ADTP). Residues 29 to 44 (TSSFSPLESPTPTPTS) show a composition bias toward low complexity. 2 stretches are compositionally biased toward polar residues: residues 62 to 72 (LPNNTYERTPG) and 238 to 252 (KQHS…CSLG). C2H2-type zinc fingers lie at residues 320–344 (FKCK…MKSH) and 350–375 (HVCW…TKTH). The tract at residues 388–432 (LDENSPDYDPEFRGQLTPDGRPIYGSKLDDPIPGAGDMSLDGWDE) is disordered.

The protein resides in the nucleus. In terms of biological role, brlA, abaA and wetA are pivotal regulators of conidiophore development and conidium maturation. They act individually and together to regulate their own expression and that of numerous other sporulation-specific genes. Binds promoters of target genes at brlA response elements (BREs) containing the conserved sequence 5'-(C/A)(A/G)AGGG(G/A)-3'. Controls the expression of the conidiophore-specific phenol oxidase ivoB. Controls the expression of the hydrophobin rodA. Mediates the developmental switch from the indeterminate, apical growth pattern of vegetative cells to the budding growth pattern of conidiophores. Expression of brlA leads to activation of abaA, wetA and stuA, cessation of vegetative growth, cellular vacuolization and spore formation. The polypeptide is C2H2 type master regulator of conidiophore development brlA (Emericella nidulans (strain FGSC A4 / ATCC 38163 / CBS 112.46 / NRRL 194 / M139) (Aspergillus nidulans)).